The primary structure comprises 232 residues: Phosphatidylserine decarboxylase proenzyme (232 aa).

Ser190 acts as the Schiff-base intermediate with substrate; via pyruvic acid in catalysis. Ser190 carries the pyruvic acid (Ser); by autocatalysis modification.

It belongs to the phosphatidylserine decarboxylase family. PSD-A subfamily. In terms of assembly, heterodimer of a large membrane-associated beta subunit and a small pyruvoyl-containing alpha subunit. It depends on pyruvate as a cofactor. Is synthesized initially as an inactive proenzyme. Formation of the active enzyme involves a self-maturation process in which the active site pyruvoyl group is generated from an internal serine residue via an autocatalytic post-translational modification. Two non-identical subunits are generated from the proenzyme in this reaction, and the pyruvate is formed at the N-terminus of the alpha chain, which is derived from the carboxyl end of the proenzyme. The post-translation cleavage follows an unusual pathway, termed non-hydrolytic serinolysis, in which the side chain hydroxyl group of the serine supplies its oxygen atom to form the C-terminus of the beta chain, while the remainder of the serine residue undergoes an oxidative deamination to produce ammonia and the pyruvoyl prosthetic group on the alpha chain.

It localises to the cell membrane. The catalysed reaction is a 1,2-diacyl-sn-glycero-3-phospho-L-serine + H(+) = a 1,2-diacyl-sn-glycero-3-phosphoethanolamine + CO2. It participates in phospholipid metabolism; phosphatidylethanolamine biosynthesis; phosphatidylethanolamine from CDP-diacylglycerol: step 2/2. Its function is as follows. Catalyzes the formation of phosphatidylethanolamine (PtdEtn) from phosphatidylserine (PtdSer). The chain is Phosphatidylserine decarboxylase proenzyme from Bradyrhizobium sp. (strain ORS 278).